Reading from the N-terminus, the 859-residue chain is Autoinducer 2 sensor kinase/phosphatase LuxQ (859 aa).

The next 2 helical transmembrane spans lie at 15-35 (ATLI…GIFI) and 280-300 (IQHI…ALMS). Residues 489-711 (KMSHEIRTPI…TFVITLPVKD (223 aa)) enclose the Histidine kinase domain. Position 492 is a phosphohistidine; by autocatalysis (His492). A Response regulatory domain is found at 736 to 851 (KVLLVEDNHT…ALHEAFVDFK (116 aa)). A 4-aspartylphosphate modification is found at Asp785.

As to quaternary structure, binds the complex formed by AI-2 and LuxP.

The protein resides in the cell inner membrane. The enzyme catalyses ATP + protein L-histidine = ADP + protein N-phospho-L-histidine.. At low cell density, in absence of AI-2 (autoinducer 2), LuxQ has a kinase activity and autophosphorylates on a histidine residue. The phosphoryl group is then transferred to an aspartate residue in the response regulator domain. The phosphoryl group is transferred to LuxU, and ultimately to LuxO. At high cell density, in the presence of AI-2, the kinase activity is inactivated, and the response regulator domain has a phosphatase activity. The polypeptide is Autoinducer 2 sensor kinase/phosphatase LuxQ (luxQ) (Vibrio harveyi (Beneckea harveyi)).